The sequence spans 414 residues: Nuclear localization sequence-binding protein (414 aa).

3 disordered regions span residues 1-172 (MAKT…TIFV), 244-264 (STSK…TPSE), and 336-414 (RPVR…KTFD). Over residues 10-26 (NKKEVKASKQAKEEKAK) the composition is skewed to basic and acidic residues. Composition is skewed to low complexity over residues 27 to 44 (AVSS…SSSE) and 54 to 73 (ESSS…SSSD). Residues 78–87 (AETKKEESKD) show a composition bias toward basic and acidic residues. 9 positions are modified to phosphoserine: S93, S95, S96, S97, S116, S127, S129, S131, and S143. A compositionally biased stretch (acidic residues) spans 96-105 (SSDEEEEEEK). Residues 106-117 (EETKKEESKESS) are compositionally biased toward basic and acidic residues. Over residues 118-128 (SSDSSSSSSSD) the composition is skewed to low complexity. Residues 134-144 (EESNDKKRKSE) are compositionally biased toward basic and acidic residues. RRM domains follow at residues 168–246 (ATIF…MSTS) and 267–345 (DTLF…FSSP). Over residues 351 to 386 (GGRGGSRGFGGRGGGRGGNRGFGGRGGARGGRGGFR) the composition is skewed to gly residues. R353 is subject to Omega-N-methylarginine. The RGG-box stretch occupies residues 353–384 (RGGSRGFGGRGGGRGGNRGFGGRGGARGGRGG). 3 positions are modified to asymmetric dimethylarginine; by HMT1; alternate: R357, R362, and R366. 3 positions are modified to omega-N-methylarginine; by HMT1; alternate: R357, R362, and R366. An RNA-binding RGG-box region spans residues 366–384 (RGGNRGFGGRGGARGGRGG). An Omega-N-methylarginine modification is found at R370. Asymmetric dimethylarginine; by HMT1; alternate occurs at positions 375, 379, and 382. An omega-N-methylarginine; by HMT1; alternate mark is found at R375, R379, and R382. R386 carries the post-translational modification Omega-N-methylarginine.

It belongs to the RRM GAR family. Post-translationally, methylated by HMT1, forming asymmetric dimethylarginines (DMA) within a domain referred to as an RGG box, made up of repeated Gly-Gly dipeptides interspersed with Arg and aromatic residues. Pyrophosphorylated by 5-diphosphoinositol pentakisphosphate (5-IP7). Serine pyrophosphorylation is achieved by Mg(2+)-dependent, but enzyme independent transfer of a beta-phosphate from a inositol pyrophosphate to a pre-phosphorylated serine residue.

The protein resides in the nucleus. The protein localises to the nucleolus. Functionally, involved in pre-rRNA processing. Specifically binds nuclear localization sequences. Candidate for a receptor at the nucleus that may be involved in both RNA and protein transport. Binds telomeric sequences of the type (TG[1-3])n in vitro. In Saccharomyces cerevisiae (strain ATCC 204508 / S288c) (Baker's yeast), this protein is Nuclear localization sequence-binding protein.